The chain runs to 179 residues: Large ribosomal subunit protein uL5 (179 aa).

This sequence belongs to the universal ribosomal protein uL5 family. In terms of assembly, part of the 50S ribosomal subunit; part of the 5S rRNA/L5/L18/L25 subcomplex. Contacts the 5S rRNA and the P site tRNA. Forms a bridge to the 30S subunit in the 70S ribosome.

This is one of the proteins that bind and probably mediate the attachment of the 5S RNA into the large ribosomal subunit, where it forms part of the central protuberance. In the 70S ribosome it contacts protein S13 of the 30S subunit (bridge B1b), connecting the 2 subunits; this bridge is implicated in subunit movement. Contacts the P site tRNA; the 5S rRNA and some of its associated proteins might help stabilize positioning of ribosome-bound tRNAs. This chain is Large ribosomal subunit protein uL5, found in Shouchella clausii (strain KSM-K16) (Alkalihalobacillus clausii).